The following is a 158-amino-acid chain: Transcription elongation factor GreA (158 aa).

The stretch at 53–73 forms a coiled coil; sequence EQQGMVEARIRDIEAKLSNAQ.

Belongs to the GreA/GreB family.

Its function is as follows. Necessary for efficient RNA polymerase transcription elongation past template-encoded arresting sites. The arresting sites in DNA have the property of trapping a certain fraction of elongating RNA polymerases that pass through, resulting in locked ternary complexes. Cleavage of the nascent transcript by cleavage factors such as GreA or GreB allows the resumption of elongation from the new 3'terminus. GreA releases sequences of 2 to 3 nucleotides. The chain is Transcription elongation factor GreA from Pseudomonas aeruginosa (strain ATCC 15692 / DSM 22644 / CIP 104116 / JCM 14847 / LMG 12228 / 1C / PRS 101 / PAO1).